A 474-amino-acid polypeptide reads, in one-letter code: MKLSMPRFDRSPVLVVGDVMLDRYWHGCTTRISPEAPVPVVKVEQMEDRPGGAANVALNIAALGGAATLVGVTGADEAADSLARSLASAGVDVHFQRIASQPTIVKLRVMSRHQQLLRMDFEEPFATDAAALAAEVEGLLAGIRVLVLSDYGKGALKNHQALIQAARARGIAVLADPKGKDFGIYRGADLITPNLAEFENVVGRCADEGELVARGARLMADLELGALLVTRGEHGMTLMRPGHPPLHLPARAREVFDVTGAGDTVISTLAAALAAGEELPQAVALANLAAGIVVGKLGTATISVPELRRAVQREQGSERGVLGLEQLLLAIEDAHAQGEKIVFTNGCFDILHAGHVTYLEQARAQGDRLIVAVNDDASVTRLKGPGRPINTVDRRMAVLAGLGAVDWVISFAEDTPERLLEQIRPDVLVKGGDYGIDQVVGADIVRAHGGEVRVLGLVENSSTTGIVEKIRRQP.

Residues M1 to S317 are ribokinase. N194–E197 is an ATP binding site. D263 is a catalytic residue. A cytidylyltransferase region spans residues F343–P474.

This sequence in the N-terminal section; belongs to the carbohydrate kinase PfkB family. In the C-terminal section; belongs to the cytidylyltransferase family. In terms of assembly, homodimer.

The catalysed reaction is D-glycero-beta-D-manno-heptose 7-phosphate + ATP = D-glycero-beta-D-manno-heptose 1,7-bisphosphate + ADP + H(+). It carries out the reaction D-glycero-beta-D-manno-heptose 1-phosphate + ATP + H(+) = ADP-D-glycero-beta-D-manno-heptose + diphosphate. The protein operates within nucleotide-sugar biosynthesis; ADP-L-glycero-beta-D-manno-heptose biosynthesis; ADP-L-glycero-beta-D-manno-heptose from D-glycero-beta-D-manno-heptose 7-phosphate: step 1/4. Its pathway is nucleotide-sugar biosynthesis; ADP-L-glycero-beta-D-manno-heptose biosynthesis; ADP-L-glycero-beta-D-manno-heptose from D-glycero-beta-D-manno-heptose 7-phosphate: step 3/4. Functionally, catalyzes the phosphorylation of D-glycero-D-manno-heptose 7-phosphate at the C-1 position to selectively form D-glycero-beta-D-manno-heptose-1,7-bisphosphate. Its function is as follows. Catalyzes the ADP transfer from ATP to D-glycero-beta-D-manno-heptose 1-phosphate, yielding ADP-D-glycero-beta-D-manno-heptose. The polypeptide is Bifunctional protein HldE (Azotobacter vinelandii (strain DJ / ATCC BAA-1303)).